Reading from the N-terminus, the 326-residue chain is Vacuolar protein sorting-associated protein 26A-B (326 aa).

This sequence belongs to the VPS26 family. Component of the heterotrimeric retromer cargo-selective complex (CSC) which is believed to associate with variable sorting nexins to form functionally distinct retromer complex variants.

Its subcellular location is the cytoplasm. The protein resides in the endosome membrane. It is found in the early endosome. In terms of biological role, acts as a component of the retromer cargo-selective complex (CSC). The CSC is believed to be the core functional component of retromer or respective retromer complex variants acting to prevent missorting of selected transmembrane cargo proteins into the lysosomal degradation pathway. Retromer mediates retrograde transport of cargo proteins from endosomes to the trans-Golgi network (TGN). The polypeptide is Vacuolar protein sorting-associated protein 26A-B (vps26a-b) (Xenopus laevis (African clawed frog)).